A 112-amino-acid chain; its full sequence is UPF0102 protein JJD26997_0163 (112 aa).

Belongs to the UPF0102 family.

In Campylobacter jejuni subsp. doylei (strain ATCC BAA-1458 / RM4099 / 269.97), this protein is UPF0102 protein JJD26997_0163.